Here is a 163-residue protein sequence, read N- to C-terminus: Small ribosomal subunit protein uS5 (163 aa).

Positions 8–71 (FIEKVVSLNR…EQARKAMMKI (64 aa)) constitute an S5 DRBM domain.

Belongs to the universal ribosomal protein uS5 family. In terms of assembly, part of the 30S ribosomal subunit. Contacts proteins S4 and S8.

Its function is as follows. With S4 and S12 plays an important role in translational accuracy. Located at the back of the 30S subunit body where it stabilizes the conformation of the head with respect to the body. The sequence is that of Small ribosomal subunit protein uS5 from Lawsonia intracellularis (strain PHE/MN1-00).